Consider the following 473-residue polypeptide: Photosystem II CP43 reaction center protein (473 aa).

The propeptide occupies 1–14 (MKILYSQRRFYPVE). Residue threonine 15 is modified to N-acetylthreonine. Threonine 15 bears the Phosphothreonine mark. The next 5 helical transmembrane spans lie at 69–93 (LFEV…PHLA), 134–155 (LIGP…KDKN), 178–200 (KALY…RKIT), 255–275 (KPFA…LSYS), and 291–312 (WFNN…ASQA). Glutamate 367 is a [CaMn4O5] cluster binding site. The helical transmembrane segment at 447–471 (RARAAAAGFEKGIDRDFEPVLSMTP) threads the bilayer.

This sequence belongs to the PsbB/PsbC family. PsbC subfamily. In terms of assembly, PSII is composed of 1 copy each of membrane proteins PsbA, PsbB, PsbC, PsbD, PsbE, PsbF, PsbH, PsbI, PsbJ, PsbK, PsbL, PsbM, PsbT, PsbX, PsbY, PsbZ, Psb30/Ycf12, at least 3 peripheral proteins of the oxygen-evolving complex and a large number of cofactors. It forms dimeric complexes. Requires Binds multiple chlorophylls and provides some of the ligands for the Ca-4Mn-5O cluster of the oxygen-evolving complex. It may also provide a ligand for a Cl- that is required for oxygen evolution. PSII binds additional chlorophylls, carotenoids and specific lipids. as cofactor. Phosphorylated on threonine residue(s).

The protein localises to the plastid. Its subcellular location is the chloroplast thylakoid membrane. Functionally, one of the components of the core complex of photosystem II (PSII). It binds chlorophyll and helps catalyze the primary light-induced photochemical processes of PSII. PSII is a light-driven water:plastoquinone oxidoreductase, using light energy to abstract electrons from H(2)O, generating O(2) and a proton gradient subsequently used for ATP formation. In Marchantia polymorpha (Common liverwort), this protein is Photosystem II CP43 reaction center protein.